The following is a 406-amino-acid chain: Mitochondrial ribosome-associated GTPase 2 (406 aa).

A localized in the mitochondria region spans residues 15 to 406 (FQGVGHWALS…LGQGRQPLRW (392 aa)). The tract at residues 30 to 406 (KPSRLLPQRA…LGQGRQPLRW (377 aa)) is not localized in the mitochondria. The Obg domain occupies 70–224 (RYFVDYRRVL…RVLHLELKTV (155 aa)). The OBG-type G domain maps to 225-390 (AHAGMVGFPN…LLLHLKVLYD (166 aa)). GTP is bound by residues 231-238 (GFPNAGKS), 256-260 (FTTLK), 278-281 (DIPG), 345-348 (NKID), and 371-373 (SAL). Mg(2+) is bound by residues Ser-238 and Thr-258.

Belongs to the TRAFAC class OBG-HflX-like GTPase superfamily. OBG GTPase family. As to quaternary structure, associates with the mitochondrial ribosome large subunit; the association occurs in a GTP-dependent manner. Requires Mg(2+) as cofactor.

The protein resides in the mitochondrion. It localises to the mitochondrion inner membrane. In terms of biological role, plays a role in the regulation of the mitochondrial ribosome assembly and of translational activity. Displays GTPase activity. Involved in the ribosome maturation process. The chain is Mitochondrial ribosome-associated GTPase 2 (MTG2) from Homo sapiens (Human).